Consider the following 318-residue polypeptide: Probable ABC transporter permease protein MG189 (318 aa).

6 helical membrane-spanning segments follow: residues 42–62 (VLGF…VVSF), 98–118 (AIVV…FFTI), 134–154 (LVWF…LIGQ), 169–189 (PLIV…GFMY), 230–250 (VGIL…LLLG), and 282–302 (LKMS…FLFH). Residues 99–301 (IVVNTLVTVL…LPMFIIYFLF (203 aa)) enclose the ABC transmembrane type-1 domain.

This sequence belongs to the binding-protein-dependent transport system permease family. MalFG subfamily.

Its subcellular location is the cell membrane. Probably part of a binding-protein-dependent transport system. Probably responsible for the translocation of the substrate across the membrane. The polypeptide is Probable ABC transporter permease protein MG189 (Mycoplasma genitalium (strain ATCC 33530 / DSM 19775 / NCTC 10195 / G37) (Mycoplasmoides genitalium)).